Consider the following 537-residue polypeptide: Extracellular exo-inulinase (537 aa).

The N-terminal stretch at M1 to A19 is a signal peptide. Beta-D-fructose-binding residues include N40 and D41. The active-site Nucleophile is the D41. An N-linked (GlcNAc...) asparagine glycan is attached at N49. Beta-D-fructose contacts are provided by Q57 and W65. N67 is a glycosylation site (N-linked (GlcNAc...) asparagine). S103 serves as a coordination point for beta-D-fructose. 2 N-linked (GlcNAc...) asparagine glycosylation sites follow: N111 and N112. Positions 188, 189, and 241 each coordinate beta-D-fructose. E241 (proton donor/acceptor) is an active-site residue. N-linked (GlcNAc...) asparagine glycosylation is found at N254 and N300. W335 serves as a coordination point for beta-D-fructose. N-linked (GlcNAc...) asparagine glycans are attached at residues N398 and N430.

Belongs to the glycosyl hydrolase 32 family.

Its subcellular location is the secreted. The enzyme catalyses Hydrolysis of terminal, non-reducing (2-&gt;1)- and (2-&gt;6)-linked beta-D-fructofuranose residues in fructans.. In terms of biological role, exo-inulinase involved in utilization of the plant storage polymer inulin, consisting of fructooligosaccharides with a degree of polymerization (DP) value from 2 to 60. Splits off terminal fructose units successively from the non-reducing end of the inulin molecule, and also hydrolyzes levan, stachyose and raffinose. Hydrolyzes both beta-2,1- as well as beta-2,6-fructosyl linkages in fructooligosaccharides. The polypeptide is Extracellular exo-inulinase (Aspergillus awamori (Black koji mold)).